The chain runs to 787 residues: Signal transducer and activator of transcription 5B (787 aa).

Tyr-90 is subject to Phosphotyrosine. Ser-128 carries the phosphoserine modification. Positions 589–686 (WNDGAILGFV…EVYSKYYTPV (98 aa)) constitute an SH2 domain. A Phosphotyrosine modification is found at Tyr-682. At Tyr-699 the chain carries Phosphotyrosine; by HCK, JAK and PTK6.

It belongs to the transcription factor STAT family. Upon activation, forms a homodimer or a heterodimer with a related family member. Binds NR3C1. Interacts with NCOA1. Interacts with NMI. Interacts with SOCS7. Interacts (via SH2 domain) with INSR. Interacts with CPEB3; this inhibits STAT5B-mediated transcriptional activation. Post-translationally, tyrosine phosphorylated in response to signaling via activated KIT, resulting in translocation to the nucleus. Tyrosine phosphorylated in response to signaling via activated FLT3; wild-type FLT3 results in much weaker phosphorylation than constitutively activated mutant FLT3. Alternatively, can be phosphorylated by JAK2. Phosphorylation at Tyr-699 by PTK6 or HCK leads to an increase of its transcriptional activity.

It localises to the cytoplasm. It is found in the nucleus. Functionally, carries out a dual function: signal transduction and activation of transcription. Mediates cellular responses to the cytokine KITLG/SCF and other growth factors. Binds to the GAS element and activates PRL-induced transcription. Positively regulates hematopoietic/erythroid differentiation. The polypeptide is Signal transducer and activator of transcription 5B (STAT5B) (Bos taurus (Bovine)).